The primary structure comprises 1171 residues: ATP-dependent helicase/deoxyribonuclease subunit B (1171 aa).

Positions 1–343 (MSLRFVIGRA…LVADENYRYR (343 aa)) constitute a UvrD-like helicase ATP-binding domain. Residue 8–15 (GRAGSGKS) participates in ATP binding. One can recognise a UvrD-like helicase C-terminal domain in the interval 281 to 587 (MEQPRFHSPA…QFANIPPSLD (307 aa)). Positions 805, 1129, 1132, and 1138 each coordinate [4Fe-4S] cluster.

It belongs to the helicase family. AddB/RexB type 1 subfamily. Heterodimer of AddA and AddB. Mg(2+) serves as cofactor. The cofactor is [4Fe-4S] cluster.

The heterodimer acts as both an ATP-dependent DNA helicase and an ATP-dependent, dual-direction single-stranded exonuclease. Recognizes the chi site generating a DNA molecule suitable for the initiation of homologous recombination. The AddB subunit has 5' -&gt; 3' nuclease activity but not helicase activity. The protein is ATP-dependent helicase/deoxyribonuclease subunit B of Bacillus cereus (strain AH187).